Reading from the N-terminus, the 355-residue chain is UDP-N-acetylglucosamine--N-acetylmuramyl-(pentapeptide) pyrophosphoryl-undecaprenol N-acetylglucosamine transferase (355 aa).

UDP-N-acetyl-alpha-D-glucosamine contacts are provided by residues threonine 15 to glycine 17, asparagine 127, arginine 163, serine 191, isoleucine 244, alanine 263 to glutamate 268, and glutamine 288.

Belongs to the glycosyltransferase 28 family. MurG subfamily.

It is found in the cell inner membrane. The enzyme catalyses di-trans,octa-cis-undecaprenyl diphospho-N-acetyl-alpha-D-muramoyl-L-alanyl-D-glutamyl-meso-2,6-diaminopimeloyl-D-alanyl-D-alanine + UDP-N-acetyl-alpha-D-glucosamine = di-trans,octa-cis-undecaprenyl diphospho-[N-acetyl-alpha-D-glucosaminyl-(1-&gt;4)]-N-acetyl-alpha-D-muramoyl-L-alanyl-D-glutamyl-meso-2,6-diaminopimeloyl-D-alanyl-D-alanine + UDP + H(+). It functions in the pathway cell wall biogenesis; peptidoglycan biosynthesis. In terms of biological role, cell wall formation. Catalyzes the transfer of a GlcNAc subunit on undecaprenyl-pyrophosphoryl-MurNAc-pentapeptide (lipid intermediate I) to form undecaprenyl-pyrophosphoryl-MurNAc-(pentapeptide)GlcNAc (lipid intermediate II). This chain is UDP-N-acetylglucosamine--N-acetylmuramyl-(pentapeptide) pyrophosphoryl-undecaprenol N-acetylglucosamine transferase, found in Cronobacter sakazakii (strain ATCC BAA-894) (Enterobacter sakazakii).